The sequence spans 971 residues: GEM-interacting protein (971 aa).

A Phosphoserine modification is found at Ser-19. Disordered regions lie at residues 41–79 (AGDP…PEGP), 231–267 (LRAR…AQAK), and 383–476 (DTKK…IENG). Positions 44–56 (PVRREDLEPDKAD) are enriched in basic and acidic residues. The segment covering 59-69 (TVVTEENSEAS) has biased composition (polar residues). Phosphoserine occurs at positions 75, 235, 238, 247, 436, and 440. One can recognise an F-BAR domain in the interval 85-348 (EELDLRLIRT…CCVPFEPGQR (264 aa)). Positions 458–471 (SSDDFEERDPDLGD) are enriched in acidic residues. Residues 492–536 (THRLRRLRGPAKCRECEAFMVSGTECEECFLTCHKRCLETLLILC) form a Phorbol-ester/DAG-type zinc finger. Positions 553–756 (LQLPRDFPEE…FLIVHYEQIF (204 aa)) constitute a Rho-GAP domain. Phosphothreonine is present on Thr-659. The interval 799-865 (IALDSSPDPK…LGAQSRGHFS (67 aa)) is disordered. Residues 805-817 (PDPKHHSALEKCP) are compositionally biased toward basic and acidic residues. A phosphoserine mark is found at Ser-884, Ser-908, and Ser-924.

As to quaternary structure, interacts with GEM through its N-terminal.

Functionally, stimulates, in vitro and in vivo, the GTPase activity of RhoA. The protein is GEM-interacting protein (Gmip) of Mus musculus (Mouse).